A 687-amino-acid chain; its full sequence is Immune inhibitor A (687 aa).

The segment covering 1–12 (MKDAKADTKEKL) has biased composition (basic and acidic residues). Positions 1–25 (MKDAKADTKEKLNQPATGTPAATGP) form a signal peptide, or 32. Residues 1–43 (MKDAKADTKEKLNQPATGTPAATGPVKGGLNGKVPTSPAKQKA) form a disordered region. Positions 26 to 40 (VKGGLNGKVPTSPAK) are excised as a propeptide. Residue histidine 266 coordinates Zn(2+). The active site involves glutamate 267. Histidine 270 contributes to the Zn(2+) binding site.

The protein belongs to the peptidase M6 family. Zn(2+) is required as a cofactor. Ca(2+) serves as cofactor.

It is found in the secreted. Its function is as follows. Neutral metalloprotease that is secreted to degrade antibacterial proteins produced by the insect host for its defense (attacins and cecropins). Probably degrades some unknown crucial protein(s) too, since it is toxic when injected to insect larvae. The sequence is that of Immune inhibitor A (ina) from Bacillus thuringiensis subsp. alesti.